Consider the following 288-residue polypeptide: Probable coatomer subunit epsilon (288 aa).

Residue Ser-262 is modified to Phosphoserine.

It belongs to the COPE family. Oligomeric complex that consists of at least the alpha, beta, beta', gamma, delta, epsilon and zeta subunits.

The protein localises to the cytoplasm. Its subcellular location is the golgi apparatus membrane. The protein resides in the cytoplasmic vesicle. It localises to the COPI-coated vesicle membrane. In terms of biological role, the coatomer is a cytosolic protein complex that binds to dilysine motifs and reversibly associates with Golgi non-clathrin-coated vesicles, which further mediate biosynthetic protein transport from the ER, via the Golgi up to the trans Golgi network. The coatomer complex is required for budding from Golgi membranes, and is essential for the retrograde Golgi-to-ER transport of dilysine-tagged proteins. In Schizosaccharomyces pombe (strain 972 / ATCC 24843) (Fission yeast), this protein is Probable coatomer subunit epsilon (sec28).